The primary structure comprises 350 residues: Adenine DNA glycosylase (350 aa).

The Proton donor/acceptor role is filled by E37. [4Fe-4S] cluster is bound by residues C192, C199, C202, and C208.

Belongs to the Nth/MutY family. Monomer. Requires [4Fe-4S] cluster as cofactor.

The catalysed reaction is Hydrolyzes free adenine bases from 7,8-dihydro-8-oxoguanine:adenine mismatched double-stranded DNA, leaving an apurinic site.. Functionally, adenine glycosylase active on G-A mispairs. MutY also corrects error-prone DNA synthesis past GO lesions which are due to the oxidatively damaged form of guanine: 7,8-dihydro-8-oxoguanine (8-oxo-dGTP). This is Adenine DNA glycosylase (mutY) from Escherichia coli (strain K12).